The sequence spans 364 residues: C3a anaphylatoxin chemotactic receptor (364 aa).

Topologically, residues 1 to 50 (MGDNMDFSEHYGNFSENYVTESYGEFDLYYDPLNETSLSEQGHRSIWVLS) are extracellular. Residues asparagine 13 and asparagine 34 are each glycosylated (N-linked (GlcNAc...) asparagine). The chain crosses the membrane as a helical span at residues 51–71 (IVLCSIACVLGITGNAFVIWI). The Cytoplasmic segment spans residues 72–82 (AGVKMKRTVNT). A helical transmembrane segment spans residues 83 to 103 (IWFVNLAAADLLCCVSIPFSI). The Extracellular segment spans residues 104-120 (ADIILNSHWPYGEAMCK). Cysteines 119 and 198 form a disulfide. A helical transmembrane segment spans residues 121–141 (ILPSMVVLNMFASVFTLVLIS). The Cytoplasmic portion of the chain corresponds to 142–159 (LDRFALVILPVWAQNHRS). The chain crosses the membrane as a helical span at residues 160 to 180 (ITLAWLLCGLVWVLGLLLSLP). The Extracellular segment spans residues 181–220 (SMIYREIVVHDDMNITLCIYNHLQDKTEGNQSAIKAIHVT). Residues 221-241 (RLILGFLIPLLVIAVCYLLIG) form a helical membrane-spanning segment. Residues 242–256 (RRVSSGRFKSQRAFQ) lie on the Cytoplasmic side of the membrane. A helical transmembrane segment spans residues 257-277 (IILVVVTTFFVCWLPYHVIGL). At 278–295 (VIEYGKEASQVMARALDP) the chain is on the extracellular side. A helical membrane pass occupies residues 296 to 316 (LAISLAYVNSCLNPVLYVFMG). Residues 317–364 (QDFKERVRVSLRKIFEKVFSEDVTLRSSVYSKGQSQLSRATNSSEAQV) are Cytoplasmic-facing.

It belongs to the G-protein coupled receptor 1 family.

The protein resides in the cell membrane. In terms of biological role, receptor for the chemotactic and inflammatory peptide anaphylatoxin C3a. This receptor stimulates chemotaxis, granule enzyme release and superoxide anion production. The chain is C3a anaphylatoxin chemotactic receptor (c3ar1) from Oncorhynchus mykiss (Rainbow trout).